The chain runs to 1396 residues: DNA-directed RNA polymerase subunit beta' (1396 aa).

Zn(2+) contacts are provided by Cys-72, Cys-74, Cys-87, and Cys-90. Mg(2+)-binding residues include Asp-463, Asp-465, and Asp-467. The Zn(2+) site is built by Cys-814, Cys-889, Cys-896, and Cys-899.

The protein belongs to the RNA polymerase beta' chain family. In terms of assembly, the RNAP catalytic core consists of 2 alpha, 1 beta, 1 beta' and 1 omega subunit. When a sigma factor is associated with the core the holoenzyme is formed, which can initiate transcription. The cofactor is Mg(2+). Requires Zn(2+) as cofactor.

It catalyses the reaction RNA(n) + a ribonucleoside 5'-triphosphate = RNA(n+1) + diphosphate. Functionally, DNA-dependent RNA polymerase catalyzes the transcription of DNA into RNA using the four ribonucleoside triphosphates as substrates. In Chlamydia muridarum (strain MoPn / Nigg), this protein is DNA-directed RNA polymerase subunit beta'.